Here is a 466-residue protein sequence, read N- to C-terminus: Phosphomethylpyrimidine synthase (466 aa).

Substrate-binding positions include Asn-80, Met-109, Tyr-139, His-175, 195 to 197 (SRG), 236 to 239 (DSLR), and Glu-275. A Zn(2+)-binding site is contributed by His-279. Tyr-302 lines the substrate pocket. His-343 contacts Zn(2+). Cys-423, Cys-426, and Cys-431 together coordinate [4Fe-4S] cluster.

Belongs to the ThiC family. [4Fe-4S] cluster serves as cofactor.

The enzyme catalyses 5-amino-1-(5-phospho-beta-D-ribosyl)imidazole + S-adenosyl-L-methionine = 4-amino-2-methyl-5-(phosphooxymethyl)pyrimidine + CO + 5'-deoxyadenosine + formate + L-methionine + 3 H(+). It functions in the pathway cofactor biosynthesis; thiamine diphosphate biosynthesis. In terms of biological role, catalyzes the synthesis of the hydroxymethylpyrimidine phosphate (HMP-P) moiety of thiamine from aminoimidazole ribotide (AIR) in a radical S-adenosyl-L-methionine (SAM)-dependent reaction. The protein is Phosphomethylpyrimidine synthase of Synechococcus sp. (strain CC9902).